The sequence spans 132 residues: Small ribosomal subunit protein uS8 (132 aa).

This sequence belongs to the universal ribosomal protein uS8 family. As to quaternary structure, part of the 30S ribosomal subunit. Contacts proteins S5 and S12.

One of the primary rRNA binding proteins, it binds directly to 16S rRNA central domain where it helps coordinate assembly of the platform of the 30S subunit. The protein is Small ribosomal subunit protein uS8 of Xanthomonas euvesicatoria pv. vesicatoria (strain 85-10) (Xanthomonas campestris pv. vesicatoria).